The primary structure comprises 566 residues: Type 2 DNA topoisomerase 6 subunit B (566 aa).

ATP-binding positions include N48, D80, 101-102 (TK), 111-118 (GQQGIGIS), and K475.

The protein belongs to the TOP6B family. As to quaternary structure, homodimer. Heterotetramer of two Top6A and two Top6B chains.

The enzyme catalyses ATP-dependent breakage, passage and rejoining of double-stranded DNA.. Relaxes both positive and negative superturns and exhibits a strong decatenase activity. The polypeptide is Type 2 DNA topoisomerase 6 subunit B (Thermococcus sibiricus (strain DSM 12597 / MM 739)).